The sequence spans 103 residues: Large ribosomal subunit protein bL21 (103 aa).

Belongs to the bacterial ribosomal protein bL21 family. In terms of assembly, part of the 50S ribosomal subunit. Contacts protein L20.

Its function is as follows. This protein binds to 23S rRNA in the presence of protein L20. In Kineococcus radiotolerans (strain ATCC BAA-149 / DSM 14245 / SRS30216), this protein is Large ribosomal subunit protein bL21.